Reading from the N-terminus, the 149-residue chain is MGPKVRIMRKEENKAIVSIQAWWRGTLVRRTLLHAALRAWIIQCWWKQKLVLLMENRRRVALDAFARQEWAVVKLQSWVRMWCIRLRYLRLLHAVRIIQVYWRWHSCHTRGFIQGHYDLKENQLNLQLEISLGSQACRVQQCIPLPIKE.

2 IQ domains span residues 12–41 (ENKA…RAWI) and 68–97 (QEWA…AVRI).

In Bos taurus (Bovine), this protein is IQ domain-containing protein F5 (IQCF5).